Consider the following 192-residue polypeptide: UPF0149 protein VP2588 (192 aa).

This sequence belongs to the UPF0149 family.

The polypeptide is UPF0149 protein VP2588 (Vibrio parahaemolyticus serotype O3:K6 (strain RIMD 2210633)).